We begin with the raw amino-acid sequence, 67 residues long: Large ribosomal subunit protein uL29 (67 aa).

It belongs to the universal ribosomal protein uL29 family.

The polypeptide is Large ribosomal subunit protein uL29 (Zymomonas mobilis subsp. mobilis (strain ATCC 31821 / ZM4 / CP4)).